Reading from the N-terminus, the 93-residue chain is Putative ribosomal protein eL43-like (93 aa).

The C4-type zinc finger occupies 40–61 (CSFCGKTKMKRRAVKIRHCNSC).

It belongs to the eukaryotic ribosomal protein eL43 family.

This Homo sapiens (Human) protein is Putative ribosomal protein eL43-like (RPL37AP8).